Reading from the N-terminus, the 362-residue chain is Transcription factor bHLH128 (362 aa).

Over residues 1–16 the composition is skewed to low complexity; it reads MYQSSSSTSSSSQRSS. 4 disordered regions span residues 1 to 23, 78 to 106, 120 to 140, and 162 to 184; these read MYQS…GGGL, SDST…SNKD, SQQH…YSLA, and LNQP…HSRL. A compositionally biased stretch (polar residues) spans 78–96; that stretch reads SDSTTCGVNNSSDGQKQLG. Positions 162–173 are enriched in polar residues; that stretch reads LNQPTSDYSPQG. Residue serine 189 is modified to Phosphoserine. One can recognise a bHLH domain in the interval 289–339; it reads CATHPRSIAERERRTRISGKLKKLQDLVPNMDKQTSYSDMLDLAVQHIKGL.

As to quaternary structure, homodimer.

The protein localises to the nucleus. In Arabidopsis thaliana (Mouse-ear cress), this protein is Transcription factor bHLH128 (BHLH128).